A 112-amino-acid polypeptide reads, in one-letter code: Large ribosomal subunit protein uL22 (112 aa).

This sequence belongs to the universal ribosomal protein uL22 family. In terms of assembly, part of the 50S ribosomal subunit.

Its function is as follows. This protein binds specifically to 23S rRNA; its binding is stimulated by other ribosomal proteins, e.g. L4, L17, and L20. It is important during the early stages of 50S assembly. It makes multiple contacts with different domains of the 23S rRNA in the assembled 50S subunit and ribosome. Functionally, the globular domain of the protein is located near the polypeptide exit tunnel on the outside of the subunit, while an extended beta-hairpin is found that lines the wall of the exit tunnel in the center of the 70S ribosome. The chain is Large ribosomal subunit protein uL22 from Akkermansia muciniphila (strain ATCC BAA-835 / DSM 22959 / JCM 33894 / BCRC 81048 / CCUG 64013 / CIP 107961 / Muc).